The sequence spans 173 residues: MELVLGYLFIFVARVTDVGMGTVRMIMVVKGKRIQAAAIGFVESIIYILAIGKVLEALDNPVNILVYATGFAAGNYVGIYIEERMALGNIIAQVMCDHNVMQLVDLLRDAGFGVTVVEGYGRTGIRHLLNVSLQRKNLSKLYNVLDTHDHKAFITVTDARSIRGGYFTSVKKK.

Helical transmembrane passes span 3-23, 38-58, and 61-81; these read LVLG…MGTV, AIGF…LEAL, and PVNI…GIYI.

Belongs to the UPF0316 family.

The protein localises to the cell membrane. The polypeptide is UPF0316 protein Amet_0954 (Alkaliphilus metalliredigens (strain QYMF)).